We begin with the raw amino-acid sequence, 1854 residues long: MTTTITAKIAQRQQQHQQHQQQQLQHQQQQQQQQQHQPTSSMNGFRITGYPAAATPPARSNPIYAKPNAHELDLHISESLLYPGSTTQQQQALQSSPGPPPQLTSMLPSSGLPGAAQPIALKGNNPFLNSPSPTEAAPGVPTGLSSAQPATSASSGNYEMPEYAEPSRLRGLKQRPHSIAVGGSPAQSSFVDYNAQQQQRLLQLSRQQQQLRNAVTAAASTANGGDKETLYAALFQQYRQSPTNGQPAPPVPLHRKPAAAPVVPRRSQSTPRPPLQQQQQQQQAGINGQINGNGNQRPRSLDRFNGGLQSEAPPIPLRRFPNGNGNNNNGTLSRQKSPKKSSSADNMLMSPAGSQVNTMRHSISFHGGQETENGSKAEQTRPMSYAAPAPDQAYLEHQLRAYSEQLRTITESVRKYSEQAKLLSELKRQQQLAKQSQTNLNLLTPTTCNNSTGSNGNNNFQPNMISPEIVSKSLASLSTSQANEAQTPSNQLRLFLDNIRSSMRQEYQQHMPDDVLKPTSTLKRNGTDSLVTSNTAAKPEVEATPTPSDQLRQFLDAIRANKIPESVDKPKMTSSQTLDSFISKPLQMPDVTSGTPGGGVVGGQAASGGVAVNGQTNGIPTRRRPKSSIIPSSSNGKLEQREHSLVTSESFHQISDNLRLMSEDLQALSPSKAIPSSASSNSLKSLAANGGSSLTTELRVITSSPYSTSPKLQQMVMSKSNSSLGSVTTPSSATTTPSTAPMITDFNEILDSFQAMADKYKSKGSYDYLRKCSEALRQHSLQLKLQQQHQAHQQQQLPAHQQQQHQQQQQQQIQNGFASDDNSSSCSTTPGSIREAVQNLLLQPRNGFQILDDRMRLFIDIIDSQDRLSQDLQSEIETHRVVYDRLDGTGRKLLGSLTSQEDAVMLQRRLDEMNQRWNNLKSKSIAIRNRLESNSEHWNALLLSLRELTEWVIRKDTELSTLGLGPVRGDAVSLQKQLDDHKAFRRQLEDKRPIVESNLTSGRQYIANEAAVSDTSDTEANHDSDSRYMSAEEQSRELTRSIRREVGKLSEQWNNLIDRSDNWKHRLDEYMTKMRQFQKILEDLSSRVALAEQTKTSWLPPSSVGEANEQMQQLQRLRDKMTTASALLDDCNEQQSFFTANQVLVPTPCLSKLEDLNTRMKLLQIAMDERQKVLCQAGAQQTHENGDDGRTTSNSGTIGPLPNLGQSVKPPWERATTAANVPYYIDHERETTHWDHPEMIELMKGLADLNEIRFSAYRTAMKLRSVQKRLALDRISMSTACESFDRHGLRAQNDKLIDIPDMTTVLHSLYVTIDKIDLTLMLDLAINWILNVYDSQRTGQIRVLSFKVGLVLLCKGHLEEKYRYLFRLVADTDRRADQRRLGLLLHDCIQVPRQLGEVAAFGGSNIEPSVRSCLEQAGISQEAIDGNQDISIELQHFLGWLQHEPQSLVWLPVLHRLAAAEAAKHQAKCNICKEYPIVGFRYRCLKCFNFDMCQKCFFFGRNAKNHKLTHPMHEYCTTTTSTEDVRDFTRALKNKFKSRKYFKKHPRVGYLPVQSVLEGDALESPAPSPQHTTHQLQNDMHSRLEMYASRLAQVEYGGTGSNSTPDSDDEHQLIAQYCQALPGTSNGSAPKSPVQVMAAMDAEQREELEAIIRDLEEENANLQAEYQQLCSKEQSGMPEDSNGMQHSSSSMTGLSGQGEQGQDMMAEAKLLRQHKGRLEARMQILEDHNRQLEAQLQRLRQLLDEPNGGGSSATSSGLPSAPGSALNSKPNTLQTRSVTASQLNTDSPAKMNQQNGHYEHNSKNSSGLVTVITEQELESINDDLEDSSSSNTTNTTTTTTTTATTEKTCVELQK.

8 disordered regions span residues 1-65 (MTTT…PIYA), 84-161 (GSTT…YEMP), 240-352 (QSPT…MSPA), 516-548 (LKPTSTLKRNGTDSLVTSNTAAKPEVEATPTPS), 595-650 (TPGG…TSES), 716-740 (VMSKSNSSLGSVTTPSSATTTPSTA), 783-830 (LKLQ…STTP), and 1012-1036 (VSDTSDTEANHDSDSRYMSAEEQSR). Composition is skewed to low complexity over residues 11–37 (QRQQQHQQHQQQQLQHQQQQQQQQQHQ) and 84–96 (GSTTQQQQALQSS). The segment covering 143–157 (GLSSAQPATSASSGN) has biased composition (polar residues). Residues 276-296 (QQQQQQQQAGINGQINGNGNQ) are compositionally biased toward low complexity. Composition is skewed to polar residues over residues 331–345 (TLSRQKSPKKSSSAD) and 518–536 (PTSTLKRNGTDSLVTSNTA). Over residues 595-606 (TPGGGVVGGQAA) the composition is skewed to gly residues. Positions 716–727 (VMSKSNSSLGSV) are enriched in polar residues. Composition is skewed to low complexity over residues 728–740 (TTPSSATTTPSTA) and 783–814 (LKLQQQHQAHQQQQLPAHQQQQHQQQQQQQIQ). Residues 815–830 (NGFASDDNSSSCSTTP) are compositionally biased toward polar residues. Spectrin repeat units lie at residues 936–1069 (EHWN…RLDE) and 1072–1176 (TKMR…VLCQ). The interval 1179–1209 (AQQTHENGDDGRTTSNSGTIGPLPNLGQSVK) is disordered. One can recognise a WW domain in the interval 1206–1239 (QSVKPPWERATTAANVPYYIDHERETTHWDHPEM). Residues 1464 to 1520 (KHQAKCNICKEYPIVGFRYRCLKCFNFDMCQKCFFFGRNAKNHKLTHPMHEYCTTTT) form a ZZ-type zinc finger. Zn(2+) is bound by residues C1469, C1472, C1484, C1487, C1493, C1496, H1506, and H1510. Phosphoserine is present on S1564. Disordered regions lie at residues 1673-1701 (EQSGMPEDSNGMQHSSSSMTGLSGQGEQG) and 1744-1854 (DEPN…ELQK). Polar residues-rich tracts occupy residues 1682–1694 (NGMQHSSSSMTGL) and 1765–1796 (ALNSKPNTLQTRSVTASQLNTDSPAKMNQQNG). Positions 1815–1826 (QELESINDDLED) are enriched in acidic residues. The span at 1827–1845 (SSSSNTTNTTTTTTTTATT) shows a compositional bias: low complexity.

Component of the dystrophin associated protein complex (DAPC). Interacts with Dg, via the Dg WW domain binding sites. In terms of tissue distribution, during embryogenesis and in third instar larvae, expression is seen in pericardial cells of the dorsal vessel and in the ventral nerve cord. Expression is absent from both the embryonic and larval musculature.

It is found in the cell membrane. The protein resides in the sarcolemma. The protein localises to the cytoplasm. It localises to the cytoskeleton. Required for the maintenance of appropriate synaptic retrograde communication and the stabilization of muscle cell architecture or physiology. May play a role in anchoring the cytoskeleton to the plasma membrane. In Drosophila melanogaster (Fruit fly), this protein is Dystrophin, isoform D (Dys).